Consider the following 145-residue polypeptide: ATP synthase epsilon chain (145 aa).

Belongs to the ATPase epsilon chain family. As to quaternary structure, F-type ATPases have 2 components, CF(1) - the catalytic core - and CF(0) - the membrane proton channel. CF(1) has five subunits: alpha(3), beta(3), gamma(1), delta(1), epsilon(1). CF(0) has three main subunits: a, b and c.

It is found in the cell inner membrane. Its function is as follows. Produces ATP from ADP in the presence of a proton gradient across the membrane. In Francisella tularensis subsp. tularensis (strain FSC 198), this protein is ATP synthase epsilon chain.